A 469-amino-acid polypeptide reads, in one-letter code: Neuraminidase (469 aa).

Residues methionine 1 to lysine 6 are Intravirion-facing. A helical membrane pass occupies residues isoleucine 7–glycine 27. An involved in apical transport and lipid raft association region spans residues glycine 11 to tryptophan 33. Topologically, residues asparagine 28–lysine 469 are virion surface. Residues histidine 36–serine 90 form a hypervariable stalk region region. N-linked (GlcNAc...) asparagine; by host glycosylation is found at asparagine 44, asparagine 50, asparagine 58, asparagine 63, asparagine 68, and asparagine 88. Residues leucine 91–lysine 469 are head of neuraminidase. 8 disulfide bridges follow: cysteine 92/cysteine 417, cysteine 124/cysteine 129, cysteine 184/cysteine 231, cysteine 233/cysteine 238, cysteine 279/cysteine 292, cysteine 281/cysteine 290, cysteine 318/cysteine 335, and cysteine 421/cysteine 446. Arginine 118 contributes to the substrate binding site. Asparagine 146 is a glycosylation site (N-linked (GlcNAc...) asparagine; by host). Aspartate 151 serves as the catalytic Proton donor/acceptor. Arginine 152 serves as a coordination point for substrate. Asparagine 235 carries N-linked (GlcNAc...) asparagine; by host glycosylation. Glutamate 277–glutamate 278 contacts substrate. Substrate is bound at residue arginine 293. Ca(2+) is bound by residues aspartate 294, glycine 298, aspartate 324, and asparagine 344. N-linked (GlcNAc...) asparagine; by host glycosylation is present at asparagine 365. Arginine 368 provides a ligand contact to substrate. The Nucleophile role is filled by tyrosine 402.

Belongs to the glycosyl hydrolase 34 family. Homotetramer. Ca(2+) is required as a cofactor. Post-translationally, N-glycosylated.

It is found in the virion membrane. The protein resides in the host apical cell membrane. It carries out the reaction Hydrolysis of alpha-(2-&gt;3)-, alpha-(2-&gt;6)-, alpha-(2-&gt;8)- glycosidic linkages of terminal sialic acid residues in oligosaccharides, glycoproteins, glycolipids, colominic acid and synthetic substrates.. Inhibited by the neuraminidase inhibitors zanamivir (Relenza) and oseltamivir (Tamiflu). These drugs interfere with the release of progeny virus from infected cells and are effective against all influenza strains. Resistance to neuraminidase inhibitors is quite rare. Catalyzes the removal of terminal sialic acid residues from viral and cellular glycoconjugates. Cleaves off the terminal sialic acids on the glycosylated HA during virus budding to facilitate virus release. Additionally helps virus spread through the circulation by further removing sialic acids from the cell surface. These cleavages prevent self-aggregation and ensure the efficient spread of the progeny virus from cell to cell. Otherwise, infection would be limited to one round of replication. Described as a receptor-destroying enzyme because it cleaves a terminal sialic acid from the cellular receptors. May facilitate viral invasion of the upper airways by cleaving the sialic acid moieties on the mucin of the airway epithelial cells. Likely to plays a role in the budding process through its association with lipid rafts during intracellular transport. May additionally display a raft-association independent effect on budding. Plays a role in the determination of host range restriction on replication and virulence. Sialidase activity in late endosome/lysosome traffic seems to enhance virus replication. The sequence is that of Neuraminidase from Influenza A virus (strain A/USA:Huston/AA/1945 H1N1).